A 268-amino-acid polypeptide reads, in one-letter code: Short chain dehydrogenase/reductase dpchG (268 aa).

Residues Val18, Asp70, Asn97, Lys131, Tyr165, and Lys169 each contribute to the NADP(+) site. The active-site Proton acceptor is Tyr165. Catalysis depends on Lys169, which acts as the Lowers pKa of active site Tyr.

It belongs to the short-chain dehydrogenases/reductases (SDR) family.

It functions in the pathway secondary metabolite biosynthesis; terpenoid biosynthesis. Its function is as follows. Short chain dehydrogenase/reductase; part of the gene cluster that mediates the biosynthesis of the diterpenoid pyrones higginsianins A and B. The first step of the pathway is the synthesis of the alpha-pyrone moiety by the polyketide synthase dpchA via condensation of one acetyl-CoA starter unit with 3 malonyl-CoA units and 2 methylations. The alpha-pyrone is then combined with geranylgeranyl pyrophosphate (GGPP) formed by the GGPP synthase dpchD through the action of the prenyltransferase dpchC to yield a linear alpha-pyrone diterpenoid. Subsequent steps in the diterpenoid pyrone biosynthetic pathway involve the decalin core formation, which is initiated by the epoxidation of the C10-C11 olefin by the FAD-dependent oxidoreductase dpchE, and is followed by a cyclization cascade catalyzed by the terpene cyclase dpchB. The short chain dehydrogenase/reductase dpchG then oxidizes the 8S hydroxy group to a ketone and the short chain dehydrogenase/reductase dpchH reduces the ketone to the 8R hydroxy group to yield higginsianin B. Finally, the FAD-dependent oxidoreductase dpchF converts higginsianin B into higginsianin A. This chain is Short chain dehydrogenase/reductase dpchG, found in Colletotrichum higginsianum (strain IMI 349063) (Crucifer anthracnose fungus).